A 108-amino-acid chain; its full sequence is DNA-directed RNA polymerase III subunit RPC10 (108 aa).

Zn(2+)-binding residues include Cys5, Cys8, Cys25, Cys28, Cys69, and Cys72. The C4-type zinc-finger motif lies at 5–28 (CPGCGNGLIVEEGQRCHRFACNTC). A TFIIS-type zinc finger spans residues 65 to 107 (TAEPCPKCEHPRAYFMQLQTRYADEPMTTFYKCCNAQCGHRWR). The Hairpin motif lies at 88-89 (DE). Zn(2+) contacts are provided by Cys98 and Cys102.

This sequence belongs to the archaeal RpoM/eukaryotic RPA12/RPB9/RPC11 RNA polymerase family. In terms of assembly, component of the RNA polymerase III complex consisting of 17 subunits: a ten-subunit horseshoe-shaped catalytic core composed of POLR3A/RPC1, POLR3B/RPC2, POLR1C/RPAC1, POLR1D/RPAC2, POLR3K/RPC10, POLR2E/RPABC1, POLR2F/RPABC2, POLR2H/RPABC3, POLR2K/RPABC4 and POLR2L/RPABC5; a mobile stalk composed of two subunits POLR3H/RPC8 and CRCP/RPC9, protruding from the core and functioning primarily in transcription initiation; and additional subunits homologous to general transcription factors of the RNA polymerase II machinery, POLR3C/RPC3-POLR3F/RPC6-POLR3G/RPC7 heterotrimer required for transcription initiation and POLR3D/RPC4-POLR3E/RPC5 heterodimer involved in both transcription initiation and termination.

The protein resides in the nucleus. Core component of RNA polymerase III (Pol III) which synthesizes small non-coding RNAs using the four ribonucleoside triphosphates as substrates. Can mediate Pol I proofreading of the nascent RNA transcript. Anchors into the Pol III active site to constantly monitor transcription fidelity, cleaves mis-incorporated 5'-ribonucleotides and restarts the transcription process. Once Pol III reaches the poly(dT) termination signal, can induce Pol III clamp opening and transcription termination. Pol III plays an important role in sensing and limiting infection by intracellular bacteria and DNA viruses. Acts as a nuclear and cytosolic DNA sensor involved in innate immune response. Can sense non-self dsDNA that serves as template for transcription into dsRNA. The non-self RNA polymerase III transcripts, such as Epstein-Barr virus-encoded RNAs (EBERs) induce type I interferon and NF-kappa-B through the RIG-I pathway. The sequence is that of DNA-directed RNA polymerase III subunit RPC10 (POLR3K) from Bos taurus (Bovine).